The primary structure comprises 356 residues: Neurogenic differentiation factor 1 (356 aa).

The tract at residues methionine 1–alanine 94 is disordered. The span at glutamate 58–aspartate 78 shows a compositional bias: acidic residues. Residues proline 81–lysine 93 show a composition bias toward basic residues. A Nuclear localization signal motif is present at residues lysine 87 to lysine 93. The bHLH domain occupies leucine 101–leucine 153. Phosphoserine is present on residues serine 162, serine 259, serine 266, and serine 274. Serine 335 carries the post-translational modification Phosphoserine; by CaMK2.

As to quaternary structure, efficient DNA-binding requires dimerization with another bHLH protein. Heterodimer with TCF3/E47; the heterodimer is inhibited in presence of ID2, but not NR0B2, to E-box element. Interacts with EP300; the interaction is inhibited by NR0B2. Interacts with RREB1. Interacts with ATOH8. Post-translationally, phosphorylated. In islet cells, phosphorylated on Ser-274 upon glucose stimulation; which may be required for nuclear localization. In activated neurons, phosphorylated on Ser-335; which promotes dendritic growth. Phosphorylated by MAPK1; phosphorylation regulates heterodimerization and DNA-binding activities. Phosphorylation on Ser-266 and Ser-274 increases transactivation on the insulin promoter in glucose-stimulated insulinoma cells.

It localises to the cytoplasm. The protein resides in the nucleus. Its function is as follows. Acts as a transcriptional activator: mediates transcriptional activation by binding to E box-containing promoter consensus core sequences 5'-CANNTG-3'. Associates with the p300/CBP transcription coactivator complex to stimulate transcription of the secretin gene as well as the gene encoding the cyclin-dependent kinase inhibitor CDKN1A. Contributes to the regulation of several cell differentiation pathways, like those that promote the formation of early retinal ganglion cells, inner ear sensory neurons, granule cells forming either the cerebellum or the dentate gyrus cell layer of the hippocampus, endocrine islet cells of the pancreas and enteroendocrine cells of the small intestine. Together with PAX6 or SIX3, is required for the regulation of amacrine cell fate specification. Also required for dendrite morphogenesis and maintenance in the cerebellar cortex. Associates with chromatin to enhancer regulatory elements in genes encoding key transcriptional regulators of neurogenesis. In Homo sapiens (Human), this protein is Neurogenic differentiation factor 1 (NEUROD1).